Here is a 35-residue protein sequence, read N- to C-terminus: Coatomer subunit alpha (35 aa).

Oligomeric complex that consists of at least the alpha, beta, beta', gamma, delta, epsilon and zeta subunits. Interacts with SCYL1. Interacts with JAGN1. Interacts with TMEM41B. Interacts with SVEP1. Probably interacts with PEX11A. Gastric, duodenal and jejunal mucosa. Circulates in the blood. Seems to be confined to specific endocrine cells.

Functionally, xenin stimulates exocrine pancreatic secretion. It inhibits pentagastrin-stimulated secretion of acid, to induce exocrine pancreatic secretion and to affect small and large intestinal motility. In the gut, xenin interacts with the neurotensin receptor. This chain is Coatomer subunit alpha (COPA), found in Canis lupus familiaris (Dog).